The following is an 804-amino-acid chain: Leucine--tRNA ligase (804 aa).

Positions 39-50 (PYPSGKGLHVGH) match the 'HIGH' region motif. The short motif at 573–577 (KMSKS) is the 'KMSKS' region element. Position 576 (Lys-576) interacts with ATP.

Belongs to the class-I aminoacyl-tRNA synthetase family.

The protein resides in the cytoplasm. The enzyme catalyses tRNA(Leu) + L-leucine + ATP = L-leucyl-tRNA(Leu) + AMP + diphosphate. This is Leucine--tRNA ligase from Lactobacillus delbrueckii subsp. bulgaricus (strain ATCC BAA-365 / Lb-18).